The following is a 305-amino-acid chain: UDP-3-O-acyl-N-acetylglucosamine deacetylase (305 aa).

Residues histidine 79, histidine 238, and aspartate 242 each coordinate Zn(2+). Histidine 265 functions as the Proton donor in the catalytic mechanism.

This sequence belongs to the LpxC family. Requires Zn(2+) as cofactor.

It catalyses the reaction a UDP-3-O-[(3R)-3-hydroxyacyl]-N-acetyl-alpha-D-glucosamine + H2O = a UDP-3-O-[(3R)-3-hydroxyacyl]-alpha-D-glucosamine + acetate. The protein operates within glycolipid biosynthesis; lipid IV(A) biosynthesis; lipid IV(A) from (3R)-3-hydroxytetradecanoyl-[acyl-carrier-protein] and UDP-N-acetyl-alpha-D-glucosamine: step 2/6. Its function is as follows. Catalyzes the hydrolysis of UDP-3-O-myristoyl-N-acetylglucosamine to form UDP-3-O-myristoylglucosamine and acetate, the committed step in lipid A biosynthesis. In Shigella boydii serotype 18 (strain CDC 3083-94 / BS512), this protein is UDP-3-O-acyl-N-acetylglucosamine deacetylase.